We begin with the raw amino-acid sequence, 291 residues long: Pyridoxal 5'-phosphate synthase subunit PdxS (291 aa).

Asp23 contacts D-ribose 5-phosphate. The active-site Schiff-base intermediate with D-ribose 5-phosphate is Lys80. A D-ribose 5-phosphate-binding site is contributed by Gly152. Arg164 provides a ligand contact to D-glyceraldehyde 3-phosphate. D-ribose 5-phosphate-binding positions include Gly213 and 234 to 235 (GS).

It belongs to the PdxS/SNZ family. In the presence of PdxT, forms a dodecamer of heterodimers.

It catalyses the reaction aldehydo-D-ribose 5-phosphate + D-glyceraldehyde 3-phosphate + L-glutamine = pyridoxal 5'-phosphate + L-glutamate + phosphate + 3 H2O + H(+). It functions in the pathway cofactor biosynthesis; pyridoxal 5'-phosphate biosynthesis. In terms of biological role, catalyzes the formation of pyridoxal 5'-phosphate from ribose 5-phosphate (RBP), glyceraldehyde 3-phosphate (G3P) and ammonia. The ammonia is provided by the PdxT subunit. Can also use ribulose 5-phosphate and dihydroxyacetone phosphate as substrates, resulting from enzyme-catalyzed isomerization of RBP and G3P, respectively. In Bifidobacterium longum (strain DJO10A), this protein is Pyridoxal 5'-phosphate synthase subunit PdxS.